A 675-amino-acid polypeptide reads, in one-letter code: UvrABC system protein B (675 aa).

The region spanning 32 to 417 (EGLSDGLAYQ…EHAGQVVEQV (386 aa)) is the Helicase ATP-binding domain. 45–52 (GVTGSGKT) is an ATP binding site. The Beta-hairpin signature appears at 98 to 121 (YYDYYQPEAYVPSRDLFIEKDSAI). Residues 436 to 602 (QVDDLMSEIN…QIKKQVKDII (167 aa)) form the Helicase C-terminal domain. The 36-residue stretch at 634–669 (IKEIAKLEKAMQQAARDLQFEEAAVLRDRISNIKEN) folds into the UVR domain.

Belongs to the UvrB family. In terms of assembly, forms a heterotetramer with UvrA during the search for lesions. Interacts with UvrC in an incision complex.

Its subcellular location is the cytoplasm. Its function is as follows. The UvrABC repair system catalyzes the recognition and processing of DNA lesions. A damage recognition complex composed of 2 UvrA and 2 UvrB subunits scans DNA for abnormalities. Upon binding of the UvrA(2)B(2) complex to a putative damaged site, the DNA wraps around one UvrB monomer. DNA wrap is dependent on ATP binding by UvrB and probably causes local melting of the DNA helix, facilitating insertion of UvrB beta-hairpin between the DNA strands. Then UvrB probes one DNA strand for the presence of a lesion. If a lesion is found the UvrA subunits dissociate and the UvrB-DNA preincision complex is formed. This complex is subsequently bound by UvrC and the second UvrB is released. If no lesion is found, the DNA wraps around the other UvrB subunit that will check the other stand for damage. The protein is UvrABC system protein B of Neisseria gonorrhoeae (strain ATCC 700825 / FA 1090).